A 124-amino-acid chain; its full sequence is Small ribosomal subunit protein uS12 (124 aa).

Residues 1-32 (MPTIQQLVRKGRQDKVEKTKTPALKGSPQRRG) form a disordered region. The segment covering 11-20 (GRQDKVEKTK) has biased composition (basic and acidic residues). D89 is modified (3-methylthioaspartic acid).

The protein belongs to the universal ribosomal protein uS12 family. As to quaternary structure, part of the 30S ribosomal subunit. Contacts proteins S8 and S17. May interact with IF1 in the 30S initiation complex.

Its function is as follows. With S4 and S5 plays an important role in translational accuracy. In terms of biological role, interacts with and stabilizes bases of the 16S rRNA that are involved in tRNA selection in the A site and with the mRNA backbone. Located at the interface of the 30S and 50S subunits, it traverses the body of the 30S subunit contacting proteins on the other side and probably holding the rRNA structure together. The combined cluster of proteins S8, S12 and S17 appears to hold together the shoulder and platform of the 30S subunit. This Frankia alni (strain DSM 45986 / CECT 9034 / ACN14a) protein is Small ribosomal subunit protein uS12.